Reading from the N-terminus, the 627-residue chain is Pentatricopeptide repeat-containing protein At2g35030, mitochondrial (627 aa).

The N-terminal 44 residues, Met-1–Pro-44, are a transit peptide targeting the mitochondrion. 14 PPR repeats span residues Arg-45–Arg-75, Asp-76–Val-110, Thr-111–Arg-138, Asn-139–Ser-173, Trp-174–Arg-200, Asp-201–Ser-235, Trp-236–Arg-262, Asp-263–Lys-293, Asn-294–Lys-328, Asn-330–Ser-360, Asn-365–Gln-396, Asp-398–Pro-432, Ser-433–Pro-467, and Arg-469–Arg-499. The type E motif stretch occupies residues Phe-504 to Gly-579. The interval Lys-580–Arg-610 is type E(+) motif.

The protein belongs to the PPR family. PCMP-E subfamily.

It is found in the mitochondrion. The protein is Pentatricopeptide repeat-containing protein At2g35030, mitochondrial (PCMP-E15) of Arabidopsis thaliana (Mouse-ear cress).